Here is a 143-residue protein sequence, read N- to C-terminus: Trypsin inhibitor CMc (143 aa).

Residues M1–A24 form the signal peptide.

Belongs to the protease inhibitor I6 (cereal trypsin/alpha-amylase inhibitor) family. As to expression, endosperm.

Its subcellular location is the secreted. Trypsin inhibitor. No alpha-amylase inhibition detected. The protein is Trypsin inhibitor CMc (ITR2) of Hordeum vulgare (Barley).